Consider the following 299-residue polypeptide: MSAVGLPLWRQHAHALWQLSKPRVVALIVFCAVIGMFLASPGVPDAAVVVPATLGIALVAGAAAMVNCLVERGVDVRMRRTAWRATATGEVGARETLLVALAVGGMGLALLLACCNALTAWLTLGTFVGYAIVYTLLLKPNTPQNIVIGGASGAMPPVLGWTAVNGQIDAFALALFLIIYTWTPPHFWALALYRRDDYARAGLPMLPVTHGQRYTTLSIVLYGFLLTAVTLLPVALGEAGAIYLGAVLLLDGRLLFLAVRLHRQYADALARRLFAWSIWYLTWLFAALLLDHYYLIPLN.

Transmembrane regions (helical) follow at residues 24-44 (VVAL…PGVP), 46-66 (AAVV…AAMV), 97-117 (LLVA…CCNA), 118-138 (LTAW…TLLL), 146-166 (IVIG…AVNG), 170-190 (AFAL…FWAL), 217-237 (LSIV…VALG), 239-259 (AGAI…FLAV), and 278-298 (IWYL…LIPL).

It belongs to the UbiA prenyltransferase family. Protoheme IX farnesyltransferase subfamily.

The protein localises to the cell inner membrane. The enzyme catalyses heme b + (2E,6E)-farnesyl diphosphate + H2O = Fe(II)-heme o + diphosphate. The protein operates within porphyrin-containing compound metabolism; heme O biosynthesis; heme O from protoheme: step 1/1. Functionally, converts heme B (protoheme IX) to heme O by substitution of the vinyl group on carbon 2 of heme B porphyrin ring with a hydroxyethyl farnesyl side group. The chain is Protoheme IX farnesyltransferase 1 from Chromobacterium violaceum (strain ATCC 12472 / DSM 30191 / JCM 1249 / CCUG 213 / NBRC 12614 / NCIMB 9131 / NCTC 9757 / MK).